The primary structure comprises 371 residues: Probable beta-1,4-xylosyltransferase GT43A (371 aa).

The Cytoplasmic segment spans residues 1–19 (MGTAAVAAAERPKQRRSSH). A helical; Signal-anchor for type II membrane protein membrane pass occupies residues 20-42 (LWKKALLHFSLCFVMGFFTGFAP). The Lumenal segment spans residues 43-371 (SSSSSWRAGS…TSTPKTHNRR (329 aa)). N-linked (GlcNAc...) asparagine glycosylation is found at asparagine 176 and asparagine 299.

It belongs to the glycosyltransferase 43 family.

It localises to the golgi apparatus membrane. Functionally, probable beta-1,4-xylosyltransferase involved in xylan biosynthesis in cell walls. This is Probable beta-1,4-xylosyltransferase GT43A from Oryza sativa subsp. japonica (Rice).